Consider the following 611-residue polypeptide: 1,4-alpha-glucan branching enzyme GlgB (611 aa).

The Nucleophile role is filled by Asp-302. Glu-343 (proton donor) is an active-site residue.

The protein belongs to the glycosyl hydrolase 13 family. GlgB subfamily. In terms of assembly, monomer.

The enzyme catalyses Transfers a segment of a (1-&gt;4)-alpha-D-glucan chain to a primary hydroxy group in a similar glucan chain.. It participates in glycan biosynthesis; glycogen biosynthesis. Catalyzes the formation of the alpha-1,6-glucosidic linkages in glycogen by scission of a 1,4-alpha-linked oligosaccharide from growing alpha-1,4-glucan chains and the subsequent attachment of the oligosaccharide to the alpha-1,6 position. This chain is 1,4-alpha-glucan branching enzyme GlgB, found in Fusobacterium nucleatum subsp. nucleatum (strain ATCC 25586 / DSM 15643 / BCRC 10681 / CIP 101130 / JCM 8532 / KCTC 2640 / LMG 13131 / VPI 4355).